The chain runs to 396 residues: Protein nipi-4 (396 aa).

The Extracellular segment spans residues 1–20; it reads MELDHTPPPSVLNDNCSASY. Asn-15 is a glycosylation site (N-linked (GlcNAc...) asparagine). A helical membrane pass occupies residues 21-41; the sequence is MTPYATVIAMSGLYLLAIFYF. Over 42 to 396 the chain is Cytoplasmic; the sequence is CKKSKKMCQP…EHHCQSVIHY (355 aa). The 288-residue stretch at 81–368 folds into the Protein kinase domain; it reads EVDDFQIGQT…SRLSELHHIV (288 aa). ATP is bound by residues 87 to 95 and Lys-111; that span reads IGQTADGFI.

Belongs to the protein kinase superfamily. Tyr protein kinase family. As to expression, expressed in the epidermis of larvae and adults and in vulval and rectal cells.

Its subcellular location is the membrane. In terms of biological role, pseudokinase which plays a role in resistance to fungal infection by promoting expression of antimicrobial peptides (nlp-29, nlp-31, nlp-34, cnc-1, cnc-2 and cnc-4) in the epidermis. In addition, up-regulates nlp-29 expression upon physical wounding and in response to phorbol ester PMA treatment. This is Protein nipi-4 from Caenorhabditis elegans.